The primary structure comprises 182 residues: Probable tyrosine phosphatase protein H4 (182 aa).

The region spanning 1–182 (MEINKFICSQ…TVLKIQKSKI (182 aa)) is the Tyrosine-protein phosphatase domain. The active-site Phosphocysteine intermediate is Cys142.

This sequence belongs to the protein-tyrosine phosphatase family.

It catalyses the reaction O-phospho-L-tyrosyl-[protein] + H2O = L-tyrosyl-[protein] + phosphate. This chain is Probable tyrosine phosphatase protein H4 (H5), found in Microplitis demolitor (Parasitoid wasp).